We begin with the raw amino-acid sequence, 211 residues long: MKLWDVVAVCLVLLHTASAFPLPAGKRLLEAPAEDHSLGHRRVPFALTSDSNMPEDYPDQFDDVMDFIQATIKRLKRSPDKQAAALPRRERNRQAAAASPENSRGKGRRGQRGKNRGCVLTAIHLNVTDLGLGYETKEELIFRYCSGSCEAAETMYDKILKNLSRSRRLTSDKVGQACCRPVAFDDDLSFLDDSLVYHILRKHSAKRCGCI.

The signal sequence occupies residues 1-19 (MKLWDVVAVCLVLLHTASA). Positions 20-75 (FPLPAGKRLLEAPAEDHSLGHRRVPFALTSDSNMPEDYPDQFDDVMDFIQATIKRL) are excised as a propeptide. Residues 76–113 (KRSPDKQAAALPRRERNRQAAAASPENSRGKGRRGQRG) are disordered. 3 disulfides stabilise this stretch: C118/C179, C145/C208, and C149/C210. N-linked (GlcNAc...) asparagine glycosylation is found at N126 and N162.

The protein belongs to the TGF-beta family. GDNF subfamily. In terms of assembly, homodimer; disulfide-linked. Interacts with GFRA1 coreceptor and RET: forms a 2:2:2 ternary complex composed of GDNF ligand, GFRA1 and RET receptor. Interacts (via propeptide) with SORL1 (via N-terminal ectodomain); this interaction affects GDNF-regulated, but not constitutive secretion. Also interacts with SORL1 in complex with GFRA1; this interaction leads to GDNF endocytosis and lysosomal degradation. Expressed in both the central nervous system (CNS) and in non-CNS tissues, including the kidney, lung, bone, heart, liver, spleen, sciatic nerve and blood. Expressed in brain (at protein level). Localizes at the proximal ligature of the hypoglossal nerve.

It localises to the secreted. In terms of biological role, neurotrophic factor that enhances survival and morphological differentiation of dopaminergic neurons and increases their high-affinity dopamine uptake. Acts by binding to its coreceptor, GFRA1, leading to autophosphorylation and activation of the RET receptor. May also modulate local neuronal effects in distal regions of the motor neuron. Involved in the development of the neural crest. This chain is Glial cell line-derived neurotrophic factor (Gdnf), found in Rattus norvegicus (Rat).